Consider the following 393-residue polypeptide: Na(+)/H(+) antiporter NhaA (393 aa).

A run of 11 helical transmembrane segments spans residues 24 to 44, 58 to 78, 96 to 116, 126 to 146, 155 to 175, 178 to 198, 214 to 234, 267 to 287, 300 to 320, 338 to 358, and 369 to 389; these read GGLVLMAVALAAIVTANSPLA, LSLLHWINDALMALFFLLVGL, ILPGAAALGGMLFPALFYILF, GWAIPTATDIAFALGVISLFG, IFLAALAIIDDLGAVVIIALF, SDLNLLALAAAAAVLAALYGM, AVLWVLVFASGIHATLAGVLL, VAFIVVPIFGFANAGVSFSGV, VAAGLLLGKLVGVLSTVFLLV, GVAALCGIGFTMSLFIGLLAF, and MGILLGSLLSGLVGAAMLATF.

This sequence belongs to the NhaA Na(+)/H(+) (TC 2.A.33) antiporter family.

The protein localises to the cell inner membrane. The enzyme catalyses Na(+)(in) + 2 H(+)(out) = Na(+)(out) + 2 H(+)(in). In terms of biological role, na(+)/H(+) antiporter that extrudes sodium in exchange for external protons. This chain is Na(+)/H(+) antiporter NhaA, found in Rhizobium etli (strain ATCC 51251 / DSM 11541 / JCM 21823 / NBRC 15573 / CFN 42).